A 253-amino-acid chain; its full sequence is Retinoic acid early-inducible protein 1-gamma (253 aa).

The N-terminal stretch at 1–28 is a signal peptide; the sequence is MAKAAVTKRHHFMIQKLLILLSYGYTNG. C37 and C56 are oxidised to a cystine. N38, N70, N83, N143, and N156 each carry an N-linked (GlcNAc...) asparagine glycan. Cysteines 90 and 190 form a disulfide. The disordered stretch occupies residues 198 to 230; sequence LKQSKEKPRSTSRSPSITQLTSTSPLPPPSHST. A compositionally biased stretch (low complexity) spans 211–221; that stretch reads SPSITQLTSTS. S227 carries the GPI-anchor amidated serine lipid modification. The propeptide at 228-253 is removed in mature form; the sequence is HSTSKKGFISVGLIFISLLFAFAFAM.

Belongs to the NKG2D ligand family. Glycosylated. As to expression, expressed predominantly in embryonic brain.

The protein resides in the cell membrane. Acts as a ligand for KLRK1. The protein is Retinoic acid early-inducible protein 1-gamma (Raet1c) of Mus musculus (Mouse).